The sequence spans 449 residues: Tubulin alpha chain (449 aa).

Gln-11 lines the GTP pocket. An N6-acetyllysine modification is found at Lys-40. Glu-71, Ser-140, Gly-144, Thr-145, Thr-179, Asn-206, and Asn-228 together coordinate GTP. Glu-71 serves as a coordination point for Mg(2+). Glu-254 is an active-site residue.

The protein belongs to the tubulin family. In terms of assembly, dimer of alpha and beta chains. A typical microtubule is a hollow water-filled tube with an outer diameter of 25 nm and an inner diameter of 15 nM. Alpha-beta heterodimers associate head-to-tail to form protofilaments running lengthwise along the microtubule wall with the beta-tubulin subunit facing the microtubule plus end conferring a structural polarity. Microtubules usually have 13 protofilaments but different protofilament numbers can be found in some organisms and specialized cells. Mg(2+) serves as cofactor. Post-translationally, undergoes a tyrosination/detyrosination cycle, the cyclic removal and re-addition of a C-terminal tyrosine residue by the enzymes tubulin tyrosine carboxypeptidase (TTCP) and tubulin tyrosine ligase (TTL), respectively. In terms of processing, acetylation of alpha chains at Lys-40 stabilizes microtubules and affects affinity and processivity of microtubule motors. This modification has a role in multiple cellular functions, ranging from cell motility, cell cycle progression or cell differentiation to intracellular trafficking and signaling.

It is found in the cytoplasm. Its subcellular location is the cytoskeleton. The catalysed reaction is GTP + H2O = GDP + phosphate + H(+). In terms of biological role, tubulin is the major constituent of microtubules, a cylinder consisting of laterally associated linear protofilaments composed of alpha- and beta-tubulin heterodimers. Microtubules grow by the addition of GTP-tubulin dimers to the microtubule end, where a stabilizing cap forms. Below the cap, tubulin dimers are in GDP-bound state, owing to GTPase activity of alpha-tubulin. The polypeptide is Tubulin alpha chain (Tetrahymena pyriformis).